A 245-amino-acid polypeptide reads, in one-letter code: 1-(5-phosphoribosyl)-5-[(5-phosphoribosylamino)methylideneamino] imidazole-4-carboxamide isomerase (245 aa).

The active-site Proton acceptor is the Asp8. Catalysis depends on Asp130, which acts as the Proton donor.

It belongs to the HisA/HisF family.

The protein resides in the cytoplasm. It catalyses the reaction 1-(5-phospho-beta-D-ribosyl)-5-[(5-phospho-beta-D-ribosylamino)methylideneamino]imidazole-4-carboxamide = 5-[(5-phospho-1-deoxy-D-ribulos-1-ylimino)methylamino]-1-(5-phospho-beta-D-ribosyl)imidazole-4-carboxamide. It participates in amino-acid biosynthesis; L-histidine biosynthesis; L-histidine from 5-phospho-alpha-D-ribose 1-diphosphate: step 4/9. The chain is 1-(5-phosphoribosyl)-5-[(5-phosphoribosylamino)methylideneamino] imidazole-4-carboxamide isomerase from Pseudomonas putida (strain ATCC 47054 / DSM 6125 / CFBP 8728 / NCIMB 11950 / KT2440).